The primary structure comprises 367 residues: DNA replication and repair protein RecF (367 aa).

30 to 37 serves as a coordination point for ATP; it reads GDNAQGKT.

Belongs to the RecF family.

Its subcellular location is the cytoplasm. Functionally, the RecF protein is involved in DNA metabolism; it is required for DNA replication and normal SOS inducibility. RecF binds preferentially to single-stranded, linear DNA. It also seems to bind ATP. This is DNA replication and repair protein RecF from Clostridium beijerinckii (strain ATCC 51743 / NCIMB 8052) (Clostridium acetobutylicum).